Here is a 1155-residue protein sequence, read N- to C-terminus: ATP-dependent helicase/deoxyribonuclease subunit B (1155 aa).

The UvrD-like helicase ATP-binding domain maps to 1-278 (MSQLNAYIGR…FTKQERFENR (278 aa)). 9 to 16 (GRAGTGKS) contacts ATP. A UvrD-like helicase C-terminal domain is found at 270–584 (TKQERFENRD…SIGSMDLAKV (315 aa)). Positions 785, 1112, 1115, and 1121 each coordinate [4Fe-4S] cluster.

The protein belongs to the helicase family. AddB/RexB type 1 subfamily. Heterodimer of AddA and AddB. Requires Mg(2+) as cofactor. [4Fe-4S] cluster serves as cofactor.

In terms of biological role, the heterodimer acts as both an ATP-dependent DNA helicase and an ATP-dependent, dual-direction single-stranded exonuclease. Recognizes the chi site generating a DNA molecule suitable for the initiation of homologous recombination. The AddB subunit has 5' -&gt; 3' nuclease activity but not helicase activity. The chain is ATP-dependent helicase/deoxyribonuclease subunit B from Staphylococcus carnosus (strain TM300).